We begin with the raw amino-acid sequence, 205 residues long: Small ribosomal subunit protein uS4 (205 aa).

An S4 RNA-binding domain is found at 103–173 (RRLQTIVMKK…LEKSKRAEAA (71 aa)). Residues 174–205 (AREAAAEAAEAEQAAAQAAAPTPAPAAAAPKQ) are disordered. Residues 179-205 (AEAAEAEQAAAQAAAPTPAPAAAAPKQ) are compositionally biased toward low complexity.

Belongs to the universal ribosomal protein uS4 family. Part of the 30S ribosomal subunit. Contacts protein S5. The interaction surface between S4 and S5 is involved in control of translational fidelity.

Functionally, one of the primary rRNA binding proteins, it binds directly to 16S rRNA where it nucleates assembly of the body of the 30S subunit. Its function is as follows. With S5 and S12 plays an important role in translational accuracy. The polypeptide is Small ribosomal subunit protein uS4 (Cenarchaeum symbiosum (strain A)).